Reading from the N-terminus, the 419-residue chain is Protein transport protein sec9 (419 aa).

A compositionally biased stretch (basic residues) spans 1–11 (MKKLFKKKKGV). 3 disordered regions span residues 1–60 (MKKL…TYGS), 116–143 (ARKDMPPMKSSAAVTERPSMHRSAPSQD), and 156–186 (ARIQNDDESTTDTIPHNDDGTEGDEYGEGYR). The span at 21–32 (ESNSNTATNAPS) shows a compositional bias: polar residues. Low complexity predominate over residues 36–60 (GGTTANSYSSNSYNDNNNSNSTYGS). Residue Ser-141 is modified to Phosphoserine. T-SNARE coiled-coil homology domains follow at residues 203-265 (QFVK…AREL) and 356-418 (DAME…LRHI).

It belongs to the SNAP-25 family.

Has a role in cell separation, a final step of cytokinesis and in the assembly of the forespore membrane. May have a role in the transport of secretory proteins to these growing sites. In Schizosaccharomyces pombe (strain 972 / ATCC 24843) (Fission yeast), this protein is Protein transport protein sec9 (sec9).